The chain runs to 259 residues: Uridylate kinase (259 aa).

An ATP-binding site is contributed by 21 to 24 (KLSG). UMP is bound at residue G63. ATP is bound by residues G64 and R68. UMP contacts are provided by residues D83 and 144-151 (TGNPYFTT). Residues T171, F177, and D180 each contribute to the ATP site.

This sequence belongs to the UMP kinase family. Homohexamer.

The protein resides in the cytoplasm. It carries out the reaction UMP + ATP = UDP + ADP. The protein operates within pyrimidine metabolism; CTP biosynthesis via de novo pathway; UDP from UMP (UMPK route): step 1/1. Its activity is regulated as follows. Inhibited by UTP. Functionally, catalyzes the reversible phosphorylation of UMP to UDP. The polypeptide is Uridylate kinase (Salinibacter ruber (strain DSM 13855 / M31)).